We begin with the raw amino-acid sequence, 195 residues long: Large ribosomal subunit protein eL6 (195 aa).

Residues S105 and S115 each carry the phosphoserine modification.

Belongs to the eukaryotic ribosomal protein eL6 family. In terms of assembly, component of the large ribosomal subunit (LSU). Mature yeast ribosomes consist of a small (40S) and a large (60S) subunit. The 40S small subunit contains 1 molecule of ribosomal RNA (18S rRNA) and at least 33 different proteins. The large 60S subunit contains 3 rRNA molecules (25S, 5.8S and 5S rRNA) and at least 46 different proteins.

The protein resides in the cytoplasm. Its subcellular location is the nucleus. It localises to the nucleolus. In terms of biological role, component of the ribosome, a large ribonucleoprotein complex responsible for the synthesis of proteins in the cell. The small ribosomal subunit (SSU) binds messenger RNAs (mRNAs) and translates the encoded message by selecting cognate aminoacyl-transfer RNA (tRNA) molecules. The large subunit (LSU) contains the ribosomal catalytic site termed the peptidyl transferase center (PTC), which catalyzes the formation of peptide bonds, thereby polymerizing the amino acids delivered by tRNAs into a polypeptide chain. The nascent polypeptides leave the ribosome through a tunnel in the LSU and interact with protein factors that function in enzymatic processing, targeting, and the membrane insertion of nascent chains at the exit of the ribosomal tunnel. This Schizosaccharomyces pombe (strain 972 / ATCC 24843) (Fission yeast) protein is Large ribosomal subunit protein eL6 (rpl6).